The following is a 216-amino-acid chain: Protein-L-isoaspartate O-methyltransferase (216 aa).

Residue Ser-61 is part of the active site.

Belongs to the methyltransferase superfamily. L-isoaspartyl/D-aspartyl protein methyltransferase family.

The protein localises to the cytoplasm. The enzyme catalyses [protein]-L-isoaspartate + S-adenosyl-L-methionine = [protein]-L-isoaspartate alpha-methyl ester + S-adenosyl-L-homocysteine. Catalyzes the methyl esterification of L-isoaspartyl residues in peptides and proteins that result from spontaneous decomposition of normal L-aspartyl and L-asparaginyl residues. It plays a role in the repair and/or degradation of damaged proteins. This chain is Protein-L-isoaspartate O-methyltransferase, found in Dinoroseobacter shibae (strain DSM 16493 / NCIMB 14021 / DFL 12).